The chain runs to 268 residues: Phosphatidylglycerol--prolipoprotein diacylglyceryl transferase (268 aa).

7 helical membrane passes run 10-30, 56-76, 92-112, 120-140, 174-194, 202-222, and 236-256; these read VALA…LIGI, LVFW…VLFY, WKGG…ALWF, FFEL…AGRI, PSQL…LWLF, MAVS…VEFV, and WLTQ…VLIW. R139 lines the a 1,2-diacyl-sn-glycero-3-phospho-(1'-sn-glycerol) pocket.

This sequence belongs to the Lgt family.

It localises to the cell inner membrane. It catalyses the reaction L-cysteinyl-[prolipoprotein] + a 1,2-diacyl-sn-glycero-3-phospho-(1'-sn-glycerol) = an S-1,2-diacyl-sn-glyceryl-L-cysteinyl-[prolipoprotein] + sn-glycerol 1-phosphate + H(+). It participates in protein modification; lipoprotein biosynthesis (diacylglyceryl transfer). Catalyzes the transfer of the diacylglyceryl group from phosphatidylglycerol to the sulfhydryl group of the N-terminal cysteine of a prolipoprotein, the first step in the formation of mature lipoproteins. The chain is Phosphatidylglycerol--prolipoprotein diacylglyceryl transferase from Pseudomonas putida (strain ATCC 47054 / DSM 6125 / CFBP 8728 / NCIMB 11950 / KT2440).